The sequence spans 319 residues: Acetyl-coenzyme A carboxylase carboxyl transferase subunit alpha (319 aa).

Positions 35 to 296 constitute a CoA carboxyltransferase C-terminal domain; it reads NIDEEVHRLR…KAQLLADLAD (262 aa).

It belongs to the AccA family. As to quaternary structure, acetyl-CoA carboxylase is a heterohexamer composed of biotin carboxyl carrier protein (AccB), biotin carboxylase (AccC) and two subunits each of ACCase subunit alpha (AccA) and ACCase subunit beta (AccD).

The protein resides in the cytoplasm. It carries out the reaction N(6)-carboxybiotinyl-L-lysyl-[protein] + acetyl-CoA = N(6)-biotinyl-L-lysyl-[protein] + malonyl-CoA. It functions in the pathway lipid metabolism; malonyl-CoA biosynthesis; malonyl-CoA from acetyl-CoA: step 1/1. In terms of biological role, component of the acetyl coenzyme A carboxylase (ACC) complex. First, biotin carboxylase catalyzes the carboxylation of biotin on its carrier protein (BCCP) and then the CO(2) group is transferred by the carboxyltransferase to acetyl-CoA to form malonyl-CoA. The chain is Acetyl-coenzyme A carboxylase carboxyl transferase subunit alpha from Escherichia coli O127:H6 (strain E2348/69 / EPEC).